Reading from the N-terminus, the 97-residue chain is Signal recognition particle 19 kDa protein (97 aa).

This sequence belongs to the SRP19 family. In terms of assembly, part of the signal recognition particle protein translocation system, which is composed of SRP and FtsY. Archaeal SRP consists of a 7S RNA molecule of 300 nucleotides and two protein subunits: SRP54 and SRP19.

Its subcellular location is the cytoplasm. Its function is as follows. Involved in targeting and insertion of nascent membrane proteins into the cytoplasmic membrane. Binds directly to 7S RNA and mediates binding of the 54 kDa subunit of the SRP. The protein is Signal recognition particle 19 kDa protein of Methanocella arvoryzae (strain DSM 22066 / NBRC 105507 / MRE50).